The primary structure comprises 1726 residues: Transcription elongation factor SPT6 (1726 aa).

Composition is skewed to acidic residues over residues 1–18 (MSDF…EFEE), 31–45 (EEDE…EDQD), and 55–79 (DDDD…SDSG). Disordered stretches follow at residues 1 to 196 (MSDF…KGKK), 219 to 248 (AEFD…KKQT), and 482 to 512 (EVSE…QASR). A Phosphoserine modification is found at Ser-90. Residues 93-104 (DYLDDDDLDLIE) are compositionally biased toward acidic residues. A compositionally biased stretch (basic residues) spans 110-120 (KVKRRKKKYSR). Composition is skewed to acidic residues over residues 146 to 157 (GDGEGEVEDGEA), 166 to 186 (DEEE…DDDG), 219 to 240 (AEFD…DDES), and 484 to 501 (SEED…EEEE). Over residues 502–512 (QKGPDLKQASR) the composition is skewed to basic and acidic residues. Residues 806-865 (LKRRNAWREDEREKKQQDVENLKKFLLSKKPHVVAVSGENRDAHMVMEDIKRTISELEQN) adopt a coiled-coil conformation. Residues 1204 to 1273 (WNHFDSGSCP…EKFNVDLTCR (70 aa)) enclose the S1 motif domain. The 111-residue stretch at 1316-1426 (YIKRVIAHPS…LLGHKYFHEC (111 aa)) folds into the SH2 domain. Thr-1522 bears the Phosphothreonine mark. Phosphoserine is present on Ser-1525. The span at 1611 to 1627 (LMTPSYSYTTPGQQQAM) shows a compositional bias: polar residues. The segment at 1611 to 1726 (LMTPSYSYTT…ATPLLDEMDR (116 aa)) is disordered. Composition is skewed to low complexity over residues 1628–1640 (TTPQ…PQSS) and 1647–1656 (SSSTPSSSSS). The segment covering 1657–1669 (RVRTPQPKASSHT) has biased composition (polar residues).

It belongs to the SPT6 family.

The protein localises to the nucleus. Histone H3-H4 chaperone that plays a role in maintenance of chromatin structure during RNA polymerase II transcription elongation. Promotes the activation of the myogenic gene program by entailing erasure of the repressive H3K27me3 epigenetic mark through stabilization of the chromatin interaction of the H3K27 demethylase KDM6A. Plays an important role during early patterning and somitogenesis of the embryo. This chain is Transcription elongation factor SPT6 (supt6h), found in Danio rerio (Zebrafish).